We begin with the raw amino-acid sequence, 477 residues long: MQVLHVCSEMFPLLKTGGLADVIGALPAAQIADGVDVRVLLPGFPDIRRGIPDAHVVSRRDTFAGKISLLFGHYNGVGIYLIDAPHLYERPGSPYHDTNLYAYIDNVLRFALLGWVGCEMACGLDPFWRPDVVHAHDWHAGLAPAYLAARGRPAKSVFTVHNLAYQGMFYAKHMDDIELPWSFFNMHGLEFNGQLSFLKAGLYYADHITAVSPTYAREITEPQFAYGMEGLLRQRHLEGRLSGILNGVDEKIWNPESDLLLASRYTRDTLEEKAENKRQLQIAMGLKVNDKVPLFAVVSRLTNQKGLDLVLEALPGLLEQGGQLALLGAGDPVLQEGFLAAAAEHPGQAGVQIGYHEAFSHRIMGGADVILVPSRFEPCGLTQLYGLKYGTLPLVRRTGGLADTVSDSSLENLADGIASGFVFEDSNAWSLLRAIRRAFVLWSRPSLWRFVQRQAMAMDFSWQVAAKSYRELYYRLK.

Lys15 contributes to the ADP-alpha-D-glucose binding site.

The protein belongs to the glycosyltransferase 1 family. Bacterial/plant glycogen synthase subfamily.

The catalysed reaction is [(1-&gt;4)-alpha-D-glucosyl](n) + ADP-alpha-D-glucose = [(1-&gt;4)-alpha-D-glucosyl](n+1) + ADP + H(+). Its pathway is glycan biosynthesis; glycogen biosynthesis. Functionally, synthesizes alpha-1,4-glucan chains using ADP-glucose. This Salmonella typhi protein is Glycogen synthase.